The chain runs to 319 residues: Acetyl-coenzyme A carboxylase carboxyl transferase subunit alpha (319 aa).

Residues 38 to 293 (HALQDKLRLR…KAVLLNELDA (256 aa)) enclose the CoA carboxyltransferase C-terminal domain.

It belongs to the AccA family. Acetyl-CoA carboxylase is a heterohexamer composed of biotin carboxyl carrier protein (AccB), biotin carboxylase (AccC) and two subunits each of ACCase subunit alpha (AccA) and ACCase subunit beta (AccD).

Its subcellular location is the cytoplasm. It carries out the reaction N(6)-carboxybiotinyl-L-lysyl-[protein] + acetyl-CoA = N(6)-biotinyl-L-lysyl-[protein] + malonyl-CoA. It participates in lipid metabolism; malonyl-CoA biosynthesis; malonyl-CoA from acetyl-CoA: step 1/1. Its function is as follows. Component of the acetyl coenzyme A carboxylase (ACC) complex. First, biotin carboxylase catalyzes the carboxylation of biotin on its carrier protein (BCCP) and then the CO(2) group is transferred by the carboxyltransferase to acetyl-CoA to form malonyl-CoA. The chain is Acetyl-coenzyme A carboxylase carboxyl transferase subunit alpha from Stenotrophomonas maltophilia (strain R551-3).